Reading from the N-terminus, the 116-residue chain is Large ribosomal subunit protein uL18 (116 aa).

This sequence belongs to the universal ribosomal protein uL18 family. As to quaternary structure, part of the 50S ribosomal subunit; part of the 5S rRNA/L5/L18/L25 subcomplex. Contacts the 5S and 23S rRNAs.

Functionally, this is one of the proteins that bind and probably mediate the attachment of the 5S RNA into the large ribosomal subunit, where it forms part of the central protuberance. The polypeptide is Large ribosomal subunit protein uL18 (Shewanella piezotolerans (strain WP3 / JCM 13877)).